The following is a 271-amino-acid chain: ATP synthase subunit a (271 aa).

5 helical membrane passes run 38–58 (FWTL…LFLA), 100–120 (VIAP…LMDL), 146–166 (DVNI…FYSI), 211–231 (LFGN…LLPW), and 242–262 (AIFH…LTIV).

Belongs to the ATPase A chain family. As to quaternary structure, F-type ATPases have 2 components, CF(1) - the catalytic core - and CF(0) - the membrane proton channel. CF(1) has five subunits: alpha(3), beta(3), gamma(1), delta(1), epsilon(1). CF(0) has three main subunits: a(1), b(2) and c(9-12). The alpha and beta chains form an alternating ring which encloses part of the gamma chain. CF(1) is attached to CF(0) by a central stalk formed by the gamma and epsilon chains, while a peripheral stalk is formed by the delta and b chains.

The protein resides in the cell inner membrane. Key component of the proton channel; it plays a direct role in the translocation of protons across the membrane. The sequence is that of ATP synthase subunit a from Klebsiella pneumoniae (strain 342).